Reading from the N-terminus, the 160-residue chain is 2-C-methyl-D-erythritol 2,4-cyclodiphosphate synthase (160 aa).

A divalent metal cation-binding residues include aspartate 11 and histidine 13. 4-CDP-2-C-methyl-D-erythritol 2-phosphate contacts are provided by residues 11-13 (DVH) and 37-38 (HS). Histidine 45 serves as a coordination point for a divalent metal cation. 4-CDP-2-C-methyl-D-erythritol 2-phosphate contacts are provided by residues 59 to 61 (DIG) and arginine 145.

This sequence belongs to the IspF family. As to quaternary structure, homotrimer. The cofactor is a divalent metal cation.

The enzyme catalyses 4-CDP-2-C-methyl-D-erythritol 2-phosphate = 2-C-methyl-D-erythritol 2,4-cyclic diphosphate + CMP. Its pathway is isoprenoid biosynthesis; isopentenyl diphosphate biosynthesis via DXP pathway; isopentenyl diphosphate from 1-deoxy-D-xylulose 5-phosphate: step 4/6. In terms of biological role, involved in the biosynthesis of isopentenyl diphosphate (IPP) and dimethylallyl diphosphate (DMAPP), two major building blocks of isoprenoid compounds. Catalyzes the conversion of 4-diphosphocytidyl-2-C-methyl-D-erythritol 2-phosphate (CDP-ME2P) to 2-C-methyl-D-erythritol 2,4-cyclodiphosphate (ME-CPP) with a corresponding release of cytidine 5-monophosphate (CMP). This is 2-C-methyl-D-erythritol 2,4-cyclodiphosphate synthase from Neisseria meningitidis serogroup A / serotype 4A (strain DSM 15465 / Z2491).